Reading from the N-terminus, the 249-residue chain is Glucosamine-6-phosphate deaminase (249 aa).

The active-site Proton acceptor; for enolization step is the Asp-67. Asn-136 functions as the For ring-opening step in the catalytic mechanism. His-138 acts as the Proton acceptor; for ring-opening step in catalysis. Catalysis depends on Glu-143, which acts as the For ring-opening step.

This sequence belongs to the glucosamine/galactosamine-6-phosphate isomerase family. NagB subfamily.

It catalyses the reaction alpha-D-glucosamine 6-phosphate + H2O = beta-D-fructose 6-phosphate + NH4(+). Its pathway is amino-sugar metabolism; N-acetylneuraminate degradation; D-fructose 6-phosphate from N-acetylneuraminate: step 5/5. Functionally, catalyzes the reversible isomerization-deamination of glucosamine 6-phosphate (GlcN6P) to form fructose 6-phosphate (Fru6P) and ammonium ion. The sequence is that of Glucosamine-6-phosphate deaminase from Clostridium botulinum (strain Eklund 17B / Type B).